Reading from the N-terminus, the 637-residue chain is Transcription factor PHYTOCHROME INTERACTING FACTOR-LIKE 15 (637 aa).

The segment covering 35–46 has biased composition (gly residues); sequence FFGGTGGGGGGS. 3 disordered regions span residues 35 to 54, 146 to 213, and 356 to 397; these read FFGG…QERQ, ASLP…EGVM, and ECSA…RRRR. A compositionally biased stretch (polar residues) spans 149–170; sequence PASNHNGATNNRNAPVATTTTR. The interval 384–397 is basic motif; the sequence is RTAEVHNLSERRRR. A compositionally biased stretch (basic and acidic residues) spans 384 to 397; it reads RTAEVHNLSERRRR. The bHLH domain maps to 384–433; sequence RTAEVHNLSERRRRDRINEKMRALQELIPNCNKIDKASMLDEAIEYLKTL. The interval 398–433 is helix-loop-helix motif; the sequence is DRINEKMRALQELIPNCNKIDKASMLDEAIEYLKTL. The tract at residues 601-637 is disordered; that stretch reads GDNENFRIPSSAQTKSSQFSDGTGKGTNARERDGAET. Polar residues predominate over residues 608 to 621; sequence IPSSAQTKSSQFSD. A compositionally biased stretch (basic and acidic residues) spans 628–637; the sequence is NARERDGAET.

This sequence belongs to the bHLH protein family. In terms of assembly, interacts with LF and PRR1.

It is found in the nucleus. In terms of biological role, transcription factor that may act as negative regulator of phyB-dependent light signal transduction. This chain is Transcription factor PHYTOCHROME INTERACTING FACTOR-LIKE 15, found in Oryza sativa subsp. japonica (Rice).